The sequence spans 377 residues: Queuine tRNA-ribosyltransferase (377 aa).

Catalysis depends on Asp91, which acts as the Proton acceptor. Substrate-binding positions include 91-95 (DSGGF), Asp145, Gln189, and Gly216. The RNA binding stretch occupies residues 247 to 253 (GVGKPED). The Nucleophile role is filled by Asp266. The interval 271–275 (TRNAR) is RNA binding; important for wobble base 34 recognition. Residues Cys304, Cys306, Cys309, and His335 each contribute to the Zn(2+) site.

Belongs to the queuine tRNA-ribosyltransferase family. In terms of assembly, homodimer. Within each dimer, one monomer is responsible for RNA recognition and catalysis, while the other monomer binds to the replacement base PreQ1. The cofactor is Zn(2+).

It catalyses the reaction 7-aminomethyl-7-carbaguanine + guanosine(34) in tRNA = 7-aminomethyl-7-carbaguanosine(34) in tRNA + guanine. It functions in the pathway tRNA modification; tRNA-queuosine biosynthesis. Catalyzes the base-exchange of a guanine (G) residue with the queuine precursor 7-aminomethyl-7-deazaguanine (PreQ1) at position 34 (anticodon wobble position) in tRNAs with GU(N) anticodons (tRNA-Asp, -Asn, -His and -Tyr). Catalysis occurs through a double-displacement mechanism. The nucleophile active site attacks the C1' of nucleotide 34 to detach the guanine base from the RNA, forming a covalent enzyme-RNA intermediate. The proton acceptor active site deprotonates the incoming PreQ1, allowing a nucleophilic attack on the C1' of the ribose to form the product. After dissociation, two additional enzymatic reactions on the tRNA convert PreQ1 to queuine (Q), resulting in the hypermodified nucleoside queuosine (7-(((4,5-cis-dihydroxy-2-cyclopenten-1-yl)amino)methyl)-7-deazaguanosine). The chain is Queuine tRNA-ribosyltransferase from Vibrio parahaemolyticus serotype O3:K6 (strain RIMD 2210633).